The sequence spans 156 residues: 6,7-dimethyl-8-ribityllumazine synthase (156 aa).

5-amino-6-(D-ribitylamino)uracil-binding positions include F22, A57–E59, and C81–I83. (2S)-2-hydroxy-3-oxobutyl phosphate is bound at residue G86–T87. H89 acts as the Proton donor in catalysis. 5-amino-6-(D-ribitylamino)uracil is bound at residue F114. R128 provides a ligand contact to (2S)-2-hydroxy-3-oxobutyl phosphate.

Belongs to the DMRL synthase family. Forms an icosahedral capsid composed of 60 subunits, arranged as a dodecamer of pentamers.

The catalysed reaction is (2S)-2-hydroxy-3-oxobutyl phosphate + 5-amino-6-(D-ribitylamino)uracil = 6,7-dimethyl-8-(1-D-ribityl)lumazine + phosphate + 2 H2O + H(+). It functions in the pathway cofactor biosynthesis; riboflavin biosynthesis; riboflavin from 2-hydroxy-3-oxobutyl phosphate and 5-amino-6-(D-ribitylamino)uracil: step 1/2. In terms of biological role, catalyzes the formation of 6,7-dimethyl-8-ribityllumazine by condensation of 5-amino-6-(D-ribitylamino)uracil with 3,4-dihydroxy-2-butanone 4-phosphate. This is the penultimate step in the biosynthesis of riboflavin. This chain is 6,7-dimethyl-8-ribityllumazine synthase, found in Tolumonas auensis (strain DSM 9187 / NBRC 110442 / TA 4).